The sequence spans 334 residues: Holliday junction branch migration complex subunit RuvB (334 aa).

A large ATPase domain (RuvB-L) region spans residues 1 to 182; sequence MNERMVDQSM…FGVHLRLEYY (182 aa). Residues L21, R22, G63, K66, T67, T68, 129–131, R172, Y182, and R219 each bind ATP; that span reads EDF. T67 is a Mg(2+) binding site. The segment at 183-253 is small ATPAse domain (RuvB-S); the sequence is NESDLKEIII…TTKHALGLLQ (71 aa). Residues 256-334 form a head domain (RuvB-H) region; it reads QHGLDYIDHK…HFAKSNEERE (79 aa). The DNA site is built by R292, R311, and R316.

It belongs to the RuvB family. In terms of assembly, homohexamer. Forms an RuvA(8)-RuvB(12)-Holliday junction (HJ) complex. HJ DNA is sandwiched between 2 RuvA tetramers; dsDNA enters through RuvA and exits via RuvB. An RuvB hexamer assembles on each DNA strand where it exits the tetramer. Each RuvB hexamer is contacted by two RuvA subunits (via domain III) on 2 adjacent RuvB subunits; this complex drives branch migration. In the full resolvosome a probable DNA-RuvA(4)-RuvB(12)-RuvC(2) complex forms which resolves the HJ.

It localises to the cytoplasm. It carries out the reaction ATP + H2O = ADP + phosphate + H(+). In terms of biological role, the RuvA-RuvB-RuvC complex processes Holliday junction (HJ) DNA during genetic recombination and DNA repair, while the RuvA-RuvB complex plays an important role in the rescue of blocked DNA replication forks via replication fork reversal (RFR). RuvA specifically binds to HJ cruciform DNA, conferring on it an open structure. The RuvB hexamer acts as an ATP-dependent pump, pulling dsDNA into and through the RuvAB complex. RuvB forms 2 homohexamers on either side of HJ DNA bound by 1 or 2 RuvA tetramers; 4 subunits per hexamer contact DNA at a time. Coordinated motions by a converter formed by DNA-disengaged RuvB subunits stimulates ATP hydrolysis and nucleotide exchange. Immobilization of the converter enables RuvB to convert the ATP-contained energy into a lever motion, pulling 2 nucleotides of DNA out of the RuvA tetramer per ATP hydrolyzed, thus driving DNA branch migration. The RuvB motors rotate together with the DNA substrate, which together with the progressing nucleotide cycle form the mechanistic basis for DNA recombination by continuous HJ branch migration. Branch migration allows RuvC to scan DNA until it finds its consensus sequence, where it cleaves and resolves cruciform DNA. This Staphylococcus aureus (strain MRSA252) protein is Holliday junction branch migration complex subunit RuvB.